We begin with the raw amino-acid sequence, 711 residues long: Polyribonucleotide nucleotidyltransferase (711 aa).

Mg(2+) contacts are provided by Asp-486 and Asp-492. Residues 553–612 (PRIHTIKINPDKIKDVIGKGGSVIRALTEETGTTIEIEDDGTVKIAATDGEKAKNAIRRI) enclose the KH domain. The S1 motif domain occupies 622–690 (GRVYNGKVTR…RQGRIRLSIK (69 aa)). The disordered stretch occupies residues 689-711 (IKEATEQSQPAAAPEAPAAEQGE). Residues 694 to 711 (EQSQPAAAPEAPAAEQGE) show a composition bias toward low complexity.

It belongs to the polyribonucleotide nucleotidyltransferase family. As to quaternary structure, component of the RNA degradosome, which is a multiprotein complex involved in RNA processing and mRNA degradation. Mg(2+) is required as a cofactor.

It localises to the cytoplasm. It catalyses the reaction RNA(n+1) + phosphate = RNA(n) + a ribonucleoside 5'-diphosphate. Its function is as follows. Involved in mRNA degradation. Catalyzes the phosphorolysis of single-stranded polyribonucleotides processively in the 3'- to 5'-direction. This Escherichia fergusonii (strain ATCC 35469 / DSM 13698 / CCUG 18766 / IAM 14443 / JCM 21226 / LMG 7866 / NBRC 102419 / NCTC 12128 / CDC 0568-73) protein is Polyribonucleotide nucleotidyltransferase.